Reading from the N-terminus, the 1066-residue chain is E3 ubiquitin-protein ligase RNF31 (1066 aa).

The interval Met-1 to Arg-479 is polyubiquitin-binding. Residues Thr-70–Asp-141 enclose the PUB domain. The tract at residues Leu-251–Ser-287 is disordered. A compositionally biased stretch (low complexity) spans Ala-262–Ser-287. RanBP2-type zinc fingers lie at residues Pro-293–Cys-325 and Ala-344–Ala-373. Ser-377 is modified (phosphoserine). Residues Gln-403–Pro-432 form a RanBP2-type 3 zinc finger. The tract at residues Pro-434–Met-478 is disordered. A compositionally biased stretch (polar residues) spans Gly-454–Pro-464. A compositionally biased stretch (basic and acidic residues) spans Asp-469–Met-478. Residues Gly-557–Arg-610 form an interaction with RBCK1 region. The UBA domain maps to Asn-558–Gln-609. Residues Leu-689–Asp-923 form a TRIAD supradomain region. Zn(2+) contacts are provided by Cys-693, Cys-696, Cys-711, Cys-713, Cys-716, Cys-719, Cys-738, Cys-741, Cys-793, Cys-796, Cys-811, Cys-814, Cys-819, Cys-822, His-830, Cys-835, Cys-865, and Cys-868. The RING-type 1 zinc-finger motif lies at Cys-693–Arg-743. The IBR-type zinc-finger motif lies at Ala-773–Cys-835. The RING-type 2; atypical zinc finger occupies Cys-865 to Cys-895. Cys-879 is a catalytic residue. Residues Cys-884, Cys-887, Cys-892, Cys-895, Cys-910, and His-919 each coordinate Zn(2+). An LDD domain region spans residues Lys-904–Lys-1066.

It belongs to the RBR family. In terms of assembly, component of the LUBAC complex (linear ubiquitin chain assembly complex) which consists of SHARPIN, RBCK1 and RNF31. LUBAC has a MW of approximately 600 kDa suggesting a heteromultimeric assembly of its subunits. Associates with the TNF-R1 signaling complex (TNF-RSC) in a stimulation-dependent manner. Interacts (via the PUB domain) with OTULIN (via the PIM motif); the interaction is direct. Interacts (via the PUB domain) with VCP (via the PIM motif). Interacts (via the PUB domain) with SPATA2 (via the PIM motif); interaction is direct and bridges RNF31 and CYLD. Interacts with CYLD; the interaction is indirect and is mediated via SPATA2. Interacts with MUSK. Interacts with CARD11, promoting linear ubiquitination of BCL10. In terms of processing, autoubiquitinated. Interaction with OTULIN is required to suppress formation of 'Met-1'-linked polyubiquitin chains and prevent subsequent inactivation of the LUBAC complex. Cleaved by caspase during apoptosis. Widely expressed (at protein level). Not expressed in heart.

The protein localises to the cytoplasm. It catalyses the reaction [E2 ubiquitin-conjugating enzyme]-S-ubiquitinyl-L-cysteine + [acceptor protein]-L-lysine = [E2 ubiquitin-conjugating enzyme]-L-cysteine + [acceptor protein]-N(6)-ubiquitinyl-L-lysine.. It functions in the pathway protein modification; protein ubiquitination. Its function is as follows. E3 ubiquitin-protein ligase component of the LUBAC complex which conjugates linear ('Met-1'-linked) polyubiquitin chains to substrates and plays a key role in NF-kappa-B activation and regulation of inflammation. LUBAC conjugates linear polyubiquitin to IKBKG and RIPK1 and is involved in activation of the canonical NF-kappa-B and the JNK signaling pathways. Linear ubiquitination mediated by the LUBAC complex interferes with TNF-induced cell death and thereby prevents inflammation. LUBAC is recruited to the TNF-R1 signaling complex (TNF-RSC) following polyubiquitination of TNF-RSC components by BIRC2 and/or BIRC3 and to conjugate linear polyubiquitin to IKBKG and possibly other components contributing to the stability of the complex. The LUBAC complex is also involved in innate immunity by conjugating linear polyubiquitin chains at the surface of bacteria invading the cytosol to form the ubiquitin coat surrounding bacteria. LUBAC is not able to initiate formation of the bacterial ubiquitin coat, and can only promote formation of linear polyubiquitins on pre-existing ubiquitin. Recruited to the surface of bacteria by RNF213, which initiates the bacterial ubiquitin coat. The bacterial ubiquitin coat acts as an 'eat-me' signal for xenophagy and promotes NF-kappa-B activation. Together with OTULIN, the LUBAC complex regulates the canonical Wnt signaling during angiogenesis. RNF31 is required for linear ubiquitination of BCL10, thereby promoting TCR-induced NF-kappa-B activation. Binds polyubiquitin of different linkage types. The protein is E3 ubiquitin-protein ligase RNF31 of Mus musculus (Mouse).